Consider the following 322-residue polypeptide: Cytochrome c biogenesis protein CcsA (322 aa).

Helical transmembrane passes span 9 to 29 (ILTH…LITL), 44 to 64 (GMIA…IYSG), 71 to 91 (LYES…VPYF), 98 to 118 (LTTI…SGLL), 143 to 163 (MILS…LLVI), 226 to 246 (VISL…VWAN), 253 to 273 (WSWD…AIYL), and 287 to 307 (AIVA…VNLL).

It belongs to the CcmF/CycK/Ccl1/NrfE/CcsA family. In terms of assembly, may interact with Ccs1.

It localises to the plastid. The protein localises to the chloroplast thylakoid membrane. Required during biogenesis of c-type cytochromes (cytochrome c6 and cytochrome f) at the step of heme attachment. The sequence is that of Cytochrome c biogenesis protein CcsA from Helianthus annuus (Common sunflower).